A 134-amino-acid polypeptide reads, in one-letter code: ATP synthase epsilon chain (134 aa).

Belongs to the ATPase epsilon chain family. As to quaternary structure, F-type ATPases have 2 components, CF(1) - the catalytic core - and CF(0) - the membrane proton channel. CF(1) has five subunits: alpha(3), beta(3), gamma(1), delta(1), epsilon(1). CF(0) has three main subunits: a, b and c.

It localises to the cell membrane. Its function is as follows. Produces ATP from ADP in the presence of a proton gradient across the membrane. The chain is ATP synthase epsilon chain from Listeria monocytogenes serotype 4a (strain HCC23).